Consider the following 272-residue polypeptide: Putative phosphatase HI_0597 (272 aa).

Residue aspartate 11 is the Nucleophile of the active site. Residue aspartate 11 participates in Mg(2+) binding. Leucine 12 contacts phosphate. A Mg(2+)-binding site is contributed by aspartate 13. Residues 45-46 (TG) and lysine 195 contribute to the phosphate site. Residue aspartate 218 participates in Mg(2+) binding. Asparagine 221 is a phosphate binding site.

The protein belongs to the HAD-like hydrolase superfamily. Cof family. Requires Mg(2+) as cofactor.

The chain is Putative phosphatase HI_0597 from Haemophilus influenzae (strain ATCC 51907 / DSM 11121 / KW20 / Rd).